The chain runs to 1155 residues: DNA-directed RNA polymerase subunit beta (1155 aa).

This sequence belongs to the RNA polymerase beta chain family. The RNAP catalytic core consists of 2 alpha, 1 beta, 1 beta' and 1 omega subunit. When a sigma factor is associated with the core the holoenzyme is formed, which can initiate transcription.

It catalyses the reaction RNA(n) + a ribonucleoside 5'-triphosphate = RNA(n+1) + diphosphate. Its function is as follows. DNA-dependent RNA polymerase catalyzes the transcription of DNA into RNA using the four ribonucleoside triphosphates as substrates. In Borreliella afzelii (strain PKo) (Borrelia afzelii), this protein is DNA-directed RNA polymerase subunit beta.